A 412-amino-acid chain; its full sequence is Dihydrolipoyllysine-residue acetyltransferase component of pyruvate dehydrogenase complex (412 aa).

The 77-residue stretch at 2–78 (PIKILMPVLS…PVNSLIAVLS (77 aa)) folds into the Lipoyl-binding domain. Residue lysine 43 is modified to N6-lipoyllysine. The region spanning 132-169 (FASPLAKRLAKMGNIRLESVKGSGPHGRIVKQDILSYT) is the Peripheral subunit-binding (PSBD) domain. The active site involves histidine 385.

It belongs to the 2-oxoacid dehydrogenase family. As to quaternary structure, forms a 24-polypeptide structural core with octahedral symmetry. The cofactor is (R)-lipoate.

It catalyses the reaction N(6)-[(R)-dihydrolipoyl]-L-lysyl-[protein] + acetyl-CoA = N(6)-[(R)-S(8)-acetyldihydrolipoyl]-L-lysyl-[protein] + CoA. Its function is as follows. The pyruvate dehydrogenase complex catalyzes the overall conversion of pyruvate to acetyl-CoA and CO(2). It contains multiple copies of three enzymatic components: pyruvate dehydrogenase (E1), dihydrolipoamide acetyltransferase (E2) and lipoamide dehydrogenase (E3). This is Dihydrolipoyllysine-residue acetyltransferase component of pyruvate dehydrogenase complex (pdhC) from Rickettsia felis (strain ATCC VR-1525 / URRWXCal2) (Rickettsia azadi).